Reading from the N-terminus, the 624-residue chain is Ubiquilin-2 (624 aa).

Disordered regions lie at residues 1–32 and 106–141; these read MAEN…EPKI and NRPQ…TNSN. Residue alanine 2 is modified to N-acetylalanine. Residues 15–32 show a composition bias toward low complexity; that stretch reads RGPAAAQGSAAAPAEPKI. A Ubiquitin-like domain is found at 33–107; that stretch reads IKVTVKTPKE…VHLVIKSQNR (75 aa). Residues 106 to 115 are compositionally biased toward polar residues; sequence NRPQGQSTQP. Residues 116 to 141 show a composition bias toward low complexity; that stretch reads SNAAGTNTTSASTPRSNSTPISTNSN. STI1 domains follow at residues 178–206 and 208–247; these read SPEM…QLIM and NPQM…MQEM. Positions 287–349 are disordered; the sequence is FGGNPFASVG…SGSGNSSSNA (63 aa). Over residues 294–304 the composition is skewed to low complexity; it reads SVGSSSSSGEG. A compositionally biased stretch (pro residues) spans 316-325; that stretch reads LPNPWAPPPA. Low complexity predominate over residues 326 to 349; the sequence is TQSSATTSTTTSTGSGSGNSSSNA. STI1 domains are found at residues 379–426 and 430–462; these read NPQL…QEQM and LPAF…QQGL. 12 repeat units span residues 491-493, 494-496, 497-499, 500-502, 503-505, 506-508, 509-511, 512-514, 515-517, 518-520, 521-523, and 524-526. Residues 491–526 are 12 X 3 AA tandem repeats of P-X-X; it reads PVGPVTPIGPIGPIVPFTPIGPIGPIGPTGPAAPPG. The interval 512 to 556 is disordered; the sequence is PIGPIGPTGPAAPPGSTGSGGPTGPTVSSAAPSETTSPTSESGPN. Over residues 535–553 the composition is skewed to low complexity; the sequence is GPTVSSAAPSETTSPTSES. Positions 581-621 constitute a UBA domain; sequence RFQQQLEQLNAMGFLNREANLQALIATGGDINAAIERLLGS.

Homodimer. Forms heterodimer with UBQLN1. Binds UBE3A and BTRC. Interacts with the 19S proteasome subunit. Interacts with C9orf72. Interacts with HNRNPA1 and HNRNPU. Found in a complex with UBQLN1 and MAP1LC3A/B/C. Interacts with EPS15, EPN1 and EPN2. Interacts with HERPUD1. Interacts with RAD23A. Interacts with TARDBP. Interacts (via C-terminus) with FAF2 (via N-terminus). Interacts with UBQLN4. Binds CD47. Post-translationally, degraded during macroautophagy.

It localises to the cytoplasm. Its subcellular location is the nucleus. The protein resides in the membrane. It is found in the cytoplasmic vesicle. The protein localises to the autophagosome. Its function is as follows. Plays an important role in the regulation of different protein degradation mechanisms and pathways including ubiquitin-proteasome system (UPS), autophagy and the endoplasmic reticulum-associated protein degradation (ERAD) pathway. Mediates the proteasomal targeting of misfolded or accumulated proteins for degradation by binding (via UBA domain) to their polyubiquitin chains and by interacting (via ubiquitin-like domain) with the subunits of the proteasome. Plays a role in the ERAD pathway via its interaction with ER-localized proteins FAF2/UBXD8 and HERPUD1 and may form a link between the polyubiquitinated ERAD substrates and the proteasome. Involved in the regulation of macroautophagy and autophagosome formation; required for maturation of autophagy-related protein LC3 from the cytosolic form LC3-I to the membrane-bound form LC3-II and may assist in the maturation of autophagosomes to autolysosomes by mediating autophagosome-lysosome fusion. Negatively regulates the endocytosis of GPCR receptors: AVPR2 and ADRB2, by specifically reducing the rate at which receptor-arrestin complexes concentrate in clathrin-coated pits (CCPs). The sequence is that of Ubiquilin-2 (UBQLN2) from Homo sapiens (Human).